A 536-amino-acid polypeptide reads, in one-letter code: Multifunctional cytochrome P450 monooxygenase af510 (536 aa).

A helical transmembrane segment spans residues 4–24 (ELSTLQLSCVAFVAFMAVLVF). N-linked (GlcNAc...) asparagine glycosylation is found at asparagine 210 and asparagine 293. Residue cysteine 448 participates in heme binding.

It belongs to the cytochrome P450 family. It depends on heme as a cofactor.

The protein localises to the membrane. The catalysed reaction is (+)-exo-beta-bergamotene + 2 reduced [NADPH--hemoprotein reductase] + 3 O2 = 5-dehydro-6-demethoxyfumagillol + 2 oxidized [NADPH--hemoprotein reductase] + 3 H2O + 2 H(+). The protein operates within secondary metabolite biosynthesis; terpenoid biosynthesis. Functionally, multifunctional cytochrome P450 monooxygenase; part of the gene cluster that mediates the biosynthesis of fumagillin, a meroterpenoid that has numerous biological activities including irreversible inhibition of human type 2 methionine aminopeptidase (METAP2). Within the pathway, the multifunctional cytochrome P450 monooxygenase af510 acts as a 2,4,6-trichlorophenol monooxygenase that first performs the C-H hydroxylation at the bridgehead C5 position to yield 5R-hydroxyl-beta-trans-bergamotene. Subsequently, a four electron oxidation initiated at C-9 coupled to cleavage of the cyclobutane C5-C8 bond of the bicyclo[3.1.1] core yields the epoxyketone intermediate 5-keto-cordycol. An additional epoxidation reaction also catalyzed by af510 then furnishes the characteristic bisepoxide ketone 5-keto-demethoxyfumagillol. The pathway begins with the conversion of farnesyl pyrophosphate (FPP) to beta-trans-bergamotene by the membrane-bound beta-trans-bergamotene synthase af520. The multifunctional cytochrome P450 monooxygenase af510 then converts beta-trans-bergamotene into 5-keto-demethoxyfumagillol via several oxydation steps. 5-keto-demethoxyfumagillol is then subjected to successive C-6 hydroxylation and O-methylation by the dioxygenase af480 and O-methyltransferase af390-400, respectively, to yield 5-keto-fumagillol, which is then stereoselectively reduced by the keto-reductase af490 to 5R-hydroxy-seco-sesquiterpene. The next step is the polyketide transferase af380-catalyzed transfer of a dodecapentaenoyl group synthesized by the polyketide synthase af370 onto 5R-hydroxy-seco-sesquiterpene which leads to the production of prefumagillin. Finally, oxidative cleavage by the monooxygenase af470 converts prefumagillin to fumagillin. The sequence is that of Multifunctional cytochrome P450 monooxygenase af510 from Aspergillus fumigatus (strain ATCC MYA-4609 / CBS 101355 / FGSC A1100 / Af293) (Neosartorya fumigata).